We begin with the raw amino-acid sequence, 280 residues long: Diaminopimelate epimerase (280 aa).

Positions 13 and 64 each coordinate substrate. Cys73 (proton donor) is an active-site residue. Residues 74–75 (GN), Asn164, Asn197, and 215–216 (ER) contribute to the substrate site. The active-site Proton acceptor is the Cys224. 225-226 (GT) lines the substrate pocket.

This sequence belongs to the diaminopimelate epimerase family. In terms of assembly, homodimer.

The protein resides in the cytoplasm. The catalysed reaction is (2S,6S)-2,6-diaminopimelate = meso-2,6-diaminopimelate. It functions in the pathway amino-acid biosynthesis; L-lysine biosynthesis via DAP pathway; DL-2,6-diaminopimelate from LL-2,6-diaminopimelate: step 1/1. Functionally, catalyzes the stereoinversion of LL-2,6-diaminopimelate (L,L-DAP) to meso-diaminopimelate (meso-DAP), a precursor of L-lysine and an essential component of the bacterial peptidoglycan. This Leptospira biflexa serovar Patoc (strain Patoc 1 / Ames) protein is Diaminopimelate epimerase.